The sequence spans 156 residues: MGRFIFVSFGLLVVFLSLSGTGADCPFDWSSFRQYCYRVFKQLKTWEDAERFCSEQVKGARLVSIESYREAVFVAQLLSENIKATKSHVWIGLSVENKGQQCSSKWSDGSSVSYENLVKPFSKKCFVLKKESEFHKWFNVYCGQQHLFMCKFLRPR.

A signal peptide spans 1–23; the sequence is MGRFIFVSFGLLVVFLSLSGTGA. Cystine bridges form between Cys25-Cys36, Cys53-Cys150, and Cys125-Cys142. In terms of domain architecture, C-type lectin spans 32 to 151; sequence FRQYCYRVFK…CGQQHLFMCK (120 aa).

This sequence belongs to the snaclec family. In terms of assembly, heterodimer of subunits alpha and beta; disulfide-linked. In terms of tissue distribution, expressed by the venom gland.

The protein localises to the secreted. Snaclec that dose-dependently inhibits platelet aggregation induced by ristocetin or low-dose thrombin, but not by high-dose thrombin. Binds to GPIbalpha (GP1BA). In vivo, also dose-dependently induces thrombocytopenia of mice and platelet counts remains at very low level even after 18 hours intravenous injection. The protein is Snaclec jerdonibitin subunit alpha of Protobothrops jerdonii (Jerdon's pitviper).